A 245-amino-acid polypeptide reads, in one-letter code: Ribosomal RNA small subunit methyltransferase G (245 aa).

Residues G90, L95, 140-141 (AE), and R158 contribute to the S-adenosyl-L-methionine site.

The protein belongs to the methyltransferase superfamily. RNA methyltransferase RsmG family.

It is found in the cytoplasm. Its function is as follows. Specifically methylates the N7 position of guanine in position 518 of 16S rRNA. In Mycobacterium leprae (strain TN), this protein is Ribosomal RNA small subunit methyltransferase G.